A 370-amino-acid chain; its full sequence is Protein PAM71, chloroplastic (370 aa).

Residues 1 to 38 (MLSLNLSESLRIPFQNPRPPKSDFSSTSSSPSSSSRRC) form a disordered region. A chloroplast-targeting transit peptide spans 1–73 (MLSLNLSESL…RNESQQLGFR (73 aa)). Positions 22–38 (SDFSSTSSSPSSSSRRC) are enriched in low complexity. Topologically, residues 74 to 113 (CFQRNDAACYLEKAESEEHDRNLDVLVESSIAHSRREIQR) are stromal. A helical membrane pass occupies residues 114-134 (VLMFLAVSGSVALLGTDPAFA). Over 135–161 (ASSIPNVTQSLVTSFGDLGDISSGFAS) the chain is Lumenal, thylakoid. A helical membrane pass occupies residues 162-182 (AFLLIFFSELGDKTFFIAALL). Residues 183–188 (AARNSA) are Stromal-facing. The chain crosses the membrane as a helical span at residues 189–209 (ATVFVGTFGALGIMTIISVVL). Residues 210–228 (GRTFHYVDEVLPFRFGGTD) lie on the Lumenal, thylakoid side of the membrane. Residues 229–249 (LPIDDIAAVCLLVYFGVSTLL) form a helical membrane-spanning segment. Residues 250–275 (DAVSDEGKADEEQKEAELAVSELSGN) lie on the Stromal side of the membrane. Residues 276–296 (GAGIVAAANTIISTFALVFVA) traverse the membrane as a helical segment. Residues 297–315 (EWGDKSFFSTIALAAASSP) lie on the Lumenal, thylakoid side of the membrane. A helical transmembrane segment spans residues 316–336 (LGVIAGALAGHGAATLLAVLG). The Stromal portion of the chain corresponds to 337-348 (GSLLGNFLSEKA). A helical membrane pass occupies residues 349–369 (IAYVGGVLFLVFAAVTVAEIV). Position 370 (threonine 370) is a topological domain, lumenal, thylakoid.

This sequence belongs to the GDT1 family. Homodimer.

Its subcellular location is the plastid. It localises to the chloroplast membrane. It is found in the thylakoid. Mn(2+)/H(+) exchanger, which transport Mn(2+)from the chloroplast stroma into the acidic thylakoid lumen. Might be a chloroplast-localized Ca(2+)/H(+) antiporter. Regulates Ca(2+), Mn(2+) and pH homeostasis. Required for chloroplast development. In Arabidopsis thaliana (Mouse-ear cress), this protein is Protein PAM71, chloroplastic.